The sequence spans 62 residues: MSFLKKSLFLVLFLGLVSSSICEEEKRETEEEENEDEIEEESEEKKREDPERPPGFTPFRVY.

The signal sequence occupies residues 1 to 19; that stretch reads MSFLKKSLFLVLFLGLVSS. The propeptide occupies 20-48; sequence SICEEEKRETEEEENEDEIEEESEEKKRE. Residues 22–62 are disordered; sequence CEEEKRETEEEENEDEIEEESEEKKREDPERPPGFTPFRVY. A compositionally biased stretch (acidic residues) spans 30–42; that stretch reads EEEENEDEIEEES. Basic and acidic residues predominate over residues 43-52; sequence EEKKREDPER. Residue Tyr-62 is modified to Sulfotyrosine; partial.

This sequence belongs to the frog skin active peptide (FSAP) family. Bradykinin-related peptide subfamily. Asp,Pro,Glu-[Thr6,Val10]-phyllokinin and [Thr6,Val10]-phyllokinin occur in sulfated and nonsulfated forms. [Thr6]-bradykinin and Des-Arg-[Thr6]-bradykinin are nonsulfated. As to expression, expressed by the skin glands.

The protein resides in the secreted. In terms of biological role, inhibits ACE with a Ki of 1.6 uM, and targets B2 bradykinin receptor (BDKRB2). Provokes contraction of smooth muscle preparation (ileum). In vivo, induces an early hyperalgesic effects in living rats after intraplantar injection. In Pithecopus azureus (Orange-legged monkey tree frog), this protein is Phyllokinin-1.